The following is a 97-amino-acid chain: Small ribosomal subunit protein bS6 (97 aa).

Belongs to the bacterial ribosomal protein bS6 family.

Binds together with bS18 to 16S ribosomal RNA. The sequence is that of Small ribosomal subunit protein bS6 from Syntrophomonas wolfei subsp. wolfei (strain DSM 2245B / Goettingen).